The following is a 1067-amino-acid chain: Chitinase-like protein C25A8.4 (1067 aa).

The first 18 residues, 1–18 (MGIKTLIWLSILVVGIYC), serve as a signal peptide directing secretion. GH18 domains lie at 26-364 (PVHY…IRNT), 372-727 (CTRL…QVCQ), and 743-1067 (FVVS…HKCR). Cys-30 and Cys-51 are oxidised to a cystine. N-linked (GlcNAc...) asparagine glycosylation is found at Asn-47 and Asn-216. Residues Cys-376 and Cys-397 are joined by a disulfide bond. N-linked (GlcNAc...) asparagine glycans are attached at residues Asn-475, Asn-538, and Asn-710. A disulfide bridge links Cys-747 with Cys-768. N-linked (GlcNAc...) asparagine glycans are attached at residues Asn-797 and Asn-830. The active-site Proton donor is Glu-855. Residues Asn-887, Asn-933, and Asn-1010 are each glycosylated (N-linked (GlcNAc...) asparagine).

Belongs to the glycosyl hydrolase 18 family.

It is found in the secreted. Functionally, putative chitinase. The chain is Chitinase-like protein C25A8.4 (cht-3) from Caenorhabditis elegans.